Here is a 125-residue protein sequence, read N- to C-terminus: Ribonuclease P protein component (125 aa).

Belongs to the RnpA family. Consists of a catalytic RNA component (M1 or rnpB) and a protein subunit.

The enzyme catalyses Endonucleolytic cleavage of RNA, removing 5'-extranucleotides from tRNA precursor.. Its function is as follows. RNaseP catalyzes the removal of the 5'-leader sequence from pre-tRNA to produce the mature 5'-terminus. It can also cleave other RNA substrates such as 4.5S RNA. The protein component plays an auxiliary but essential role in vivo by binding to the 5'-leader sequence and broadening the substrate specificity of the ribozyme. The sequence is that of Ribonuclease P protein component from Ruegeria pomeroyi (strain ATCC 700808 / DSM 15171 / DSS-3) (Silicibacter pomeroyi).